The following is a 705-amino-acid chain: uncharacterized protein (705 aa).

This is an uncharacterized protein from Acanthamoeba polyphaga (Amoeba).